Consider the following 561-residue polypeptide: 2-succinyl-5-enolpyruvyl-6-hydroxy-3-cyclohexene-1-carboxylate synthase (561 aa).

The protein belongs to the TPP enzyme family. MenD subfamily. In terms of assembly, homodimer. Requires Mg(2+) as cofactor. It depends on Mn(2+) as a cofactor. Thiamine diphosphate is required as a cofactor.

The enzyme catalyses isochorismate + 2-oxoglutarate + H(+) = 5-enolpyruvoyl-6-hydroxy-2-succinyl-cyclohex-3-ene-1-carboxylate + CO2. It functions in the pathway quinol/quinone metabolism; 1,4-dihydroxy-2-naphthoate biosynthesis; 1,4-dihydroxy-2-naphthoate from chorismate: step 2/7. It participates in cofactor biosynthesis; phylloquinone biosynthesis. In terms of biological role, catalyzes the thiamine diphosphate-dependent decarboxylation of 2-oxoglutarate and the subsequent addition of the resulting succinic semialdehyde-thiamine pyrophosphate anion to isochorismate to yield 2-succinyl-5-enolpyruvyl-6-hydroxy-3-cyclohexene-1-carboxylate (SEPHCHC). The polypeptide is 2-succinyl-5-enolpyruvyl-6-hydroxy-3-cyclohexene-1-carboxylate synthase (Synechococcus sp. (strain CC9605)).